We begin with the raw amino-acid sequence, 378 residues long: Chaperone protein DnaJ (378 aa).

In terms of domain architecture, J spans 5-70 (DYYEVLGVAK…QKRAAYDQYG (66 aa)). The segment at 138-216 (GYDTQIRVPS…CHGSGKVKET (79 aa)) adopts a CR-type zinc-finger fold. Cys-151, Cys-154, Cys-168, Cys-171, Cys-190, Cys-193, Cys-204, and Cys-207 together coordinate Zn(2+). CXXCXGXG motif repeat units follow at residues 151 to 158 (CEVCHGSG), 168 to 175 (CPTCHGQG), 190 to 197 (CPKCHGTG), and 204 to 211 (CVHCHGSG).

The protein belongs to the DnaJ family. In terms of assembly, homodimer. It depends on Zn(2+) as a cofactor.

It is found in the cytoplasm. In terms of biological role, participates actively in the response to hyperosmotic and heat shock by preventing the aggregation of stress-denatured proteins and by disaggregating proteins, also in an autonomous, DnaK-independent fashion. Unfolded proteins bind initially to DnaJ; upon interaction with the DnaJ-bound protein, DnaK hydrolyzes its bound ATP, resulting in the formation of a stable complex. GrpE releases ADP from DnaK; ATP binding to DnaK triggers the release of the substrate protein, thus completing the reaction cycle. Several rounds of ATP-dependent interactions between DnaJ, DnaK and GrpE are required for fully efficient folding. Also involved, together with DnaK and GrpE, in the DNA replication of plasmids through activation of initiation proteins. In Burkholderia ambifaria (strain MC40-6), this protein is Chaperone protein DnaJ.